The primary structure comprises 379 residues: Probable peptidoglycan glycosyltransferase FtsW (379 aa).

Residues 1 to 15 (MHKTEAQTYLLYDRT) lie on the Cytoplasmic side of the membrane. Residues 16 to 36 (LLLLTMGLVGIGLVMVISTSM) form a helical membrane-spanning segment. At 37 to 52 (PIGVRLSEDPFYFARR) the chain is on the periplasmic side. Residues 53–73 (YAFYLGLAVVLSLVTLGIPMA) form a helical membrane-spanning segment. At 74–79 (SWQRGS) the chain is on the cytoplasmic side. The chain crosses the membrane as a helical span at residues 80–100 (SLILLITLIMLLLVLIAGQSV). The Periplasmic segment spans residues 101–113 (NGAVRWLALGPWR). Residues 114–133 (IQPAELSKLALFCYLASYLV) traverse the membrane as a helical segment. At 134–139 (RKAEEV) the chain is on the cytoplasmic side. Residues 140–162 (RTNFWGFCKPIGVMVLLAILLLA) form a helical membrane-spanning segment. Residues 163-165 (QPD) lie on the Periplasmic side of the membrane. Residues 166–183 (LGTVLVLFITTLAMLFLA) traverse the membrane as a helical segment. The Cytoplasmic portion of the chain corresponds to 184-186 (EAK). The chain crosses the membrane as a helical span at residues 187 to 207 (IWQFLPIIGTGILAVMLLIIA). At 208-269 (KPYRRRRVTS…TEAHTDFICS (62 aa)) the chain is on the periplasmic side. Residues 270-290 (ILGEELGYFGVLLALLMVFLV) traverse the membrane as a helical segment. The Cytoplasmic portion of the chain corresponds to 291-301 (AFRAMSIGRKA). The chain crosses the membrane as a helical span at residues 302 to 322 (LAINQIFSGFLACSIGIWFSF). Residues 323 to 342 (QTMVNVGAAAGMLPTKGLTL) are Periplasmic-facing. Residues 343–363 (PFISYGGSSMLIMLTAIVLLI) traverse the membrane as a helical segment. The Cytoplasmic segment spans residues 364-379 (RIDFETRLAKLQAFVR).

It belongs to the SEDS family. FtsW subfamily.

The protein resides in the cell inner membrane. It catalyses the reaction [GlcNAc-(1-&gt;4)-Mur2Ac(oyl-L-Ala-gamma-D-Glu-L-Lys-D-Ala-D-Ala)](n)-di-trans,octa-cis-undecaprenyl diphosphate + beta-D-GlcNAc-(1-&gt;4)-Mur2Ac(oyl-L-Ala-gamma-D-Glu-L-Lys-D-Ala-D-Ala)-di-trans,octa-cis-undecaprenyl diphosphate = [GlcNAc-(1-&gt;4)-Mur2Ac(oyl-L-Ala-gamma-D-Glu-L-Lys-D-Ala-D-Ala)](n+1)-di-trans,octa-cis-undecaprenyl diphosphate + di-trans,octa-cis-undecaprenyl diphosphate + H(+). The protein operates within cell wall biogenesis; peptidoglycan biosynthesis. In terms of biological role, peptidoglycan polymerase that is essential for cell division. The protein is Probable peptidoglycan glycosyltransferase FtsW of Moranella endobia (strain PCIT).